Here is a 105-residue protein sequence, read N- to C-terminus: Heat shock protein HspQ (105 aa).

Belongs to the HspQ family.

It localises to the cytoplasm. Functionally, involved in the degradation of certain denaturated proteins, including DnaA, during heat shock stress. The protein is Heat shock protein HspQ of Sodalis glossinidius (strain morsitans).